Here is a 491-residue protein sequence, read N- to C-terminus: Glutamyl-tRNA(Gln) amidotransferase subunit A (491 aa).

Active-site charge relay system residues include K79 and S154. The Acyl-ester intermediate role is filled by S178.

It belongs to the amidase family. GatA subfamily. In terms of assembly, heterotrimer of A, B and C subunits.

It catalyses the reaction L-glutamyl-tRNA(Gln) + L-glutamine + ATP + H2O = L-glutaminyl-tRNA(Gln) + L-glutamate + ADP + phosphate + H(+). In terms of biological role, allows the formation of correctly charged Gln-tRNA(Gln) through the transamidation of misacylated Glu-tRNA(Gln) in organisms which lack glutaminyl-tRNA synthetase. The reaction takes place in the presence of glutamine and ATP through an activated gamma-phospho-Glu-tRNA(Gln). The polypeptide is Glutamyl-tRNA(Gln) amidotransferase subunit A (Natranaerobius thermophilus (strain ATCC BAA-1301 / DSM 18059 / JW/NM-WN-LF)).